The sequence spans 357 residues: 3-isopropylmalate dehydrogenase (357 aa).

77–90 (GPKWDTLPGEKRPE) provides a ligand contact to NAD(+). Positions 97, 107, 136, and 224 each coordinate substrate. D224, D248, and D252 together coordinate Mg(2+). NAD(+) is bound at residue 282–294 (GSAPDIAGQDLAN).

This sequence belongs to the isocitrate and isopropylmalate dehydrogenases family. LeuB type 1 subfamily. In terms of assembly, homodimer. Requires Mg(2+) as cofactor. The cofactor is Mn(2+).

It is found in the cytoplasm. The enzyme catalyses (2R,3S)-3-isopropylmalate + NAD(+) = 4-methyl-2-oxopentanoate + CO2 + NADH. Its pathway is amino-acid biosynthesis; L-leucine biosynthesis; L-leucine from 3-methyl-2-oxobutanoate: step 3/4. Functionally, catalyzes the oxidation of 3-carboxy-2-hydroxy-4-methylpentanoate (3-isopropylmalate) to 3-carboxy-4-methyl-2-oxopentanoate. The product decarboxylates to 4-methyl-2 oxopentanoate. The sequence is that of 3-isopropylmalate dehydrogenase from Clostridium acetobutylicum (strain ATCC 824 / DSM 792 / JCM 1419 / IAM 19013 / LMG 5710 / NBRC 13948 / NRRL B-527 / VKM B-1787 / 2291 / W).